Here is a 444-residue protein sequence, read N- to C-terminus: MFS-type transporter dbaD (444 aa).

The segment covering 1-13 (MTEQPPQNHSVDL) has biased composition (polar residues). Residues 1–57 (MTEQPPQNHSVDLNQNEDNNENDYRSSSATDAERPCEPKIEESTAKPPTGPPAPPPP) form a disordered region. N8 carries N-linked (GlcNAc...) asparagine glycosylation. Basic and acidic residues predominate over residues 31–44 (DAERPCEPKIEEST). The segment covering 48–57 (PTGPPAPPPP) has biased composition (pro residues). 11 helical membrane passes run 62 to 82 (LVAW…WGIM), 107 to 127 (WIGS…GSIY), 134 to 154 (ALLV…SLCK), 159 to 179 (VLLA…VPCV), 192 to 212 (TALG…PIVL), 223 to 243 (WSVR…IAVM), 267 to 287 (MAFT…LFYI), 301 to 323 (MAFY…PNAM), 330 to 350 (FNLI…LLAV), 356 to 376 (LIVI…LPPL), and 394 to 414 (MGFG…GAIL). N421 carries N-linked (GlcNAc...) asparagine glycosylation. A helical membrane pass occupies residues 424–444 (GLWVYGGVTSLVAGFIICIAV).

It belongs to the major facilitator superfamily. Monocarboxylate porter (TC 2.A.1.13) family.

It localises to the cell membrane. Functionally, MFS-type transporter; part of the gene cluster that mediates the biosynthesis of the antibiotic 2,4- dihydroxy-3-methyl-6-(2-oxopropyl)benzaldehyde (DHMBA) and its derivatives. Is probably involved in the transport of the metabolites to the environment. This is MFS-type transporter dbaD from Emericella nidulans (strain FGSC A4 / ATCC 38163 / CBS 112.46 / NRRL 194 / M139) (Aspergillus nidulans).